A 116-amino-acid chain; its full sequence is NADH-ubiquinone oxidoreductase chain 3 (116 aa).

The next 3 membrane-spanning stretches (helical) occupy residues 3 to 23 (LLMT…IVSF), 56 to 76 (FFLI…LLPL), and 85 to 105 (PLLT…GLIY).

The protein belongs to the complex I subunit 3 family.

The protein localises to the mitochondrion membrane. The catalysed reaction is a ubiquinone + NADH + 5 H(+)(in) = a ubiquinol + NAD(+) + 4 H(+)(out). Functionally, core subunit of the mitochondrial membrane respiratory chain NADH dehydrogenase (Complex I) that is believed to belong to the minimal assembly required for catalysis. Complex I functions in the transfer of electrons from NADH to the respiratory chain. The immediate electron acceptor for the enzyme is believed to be ubiquinone. This is NADH-ubiquinone oxidoreductase chain 3 (MT-ND3) from Paralichthys olivaceus (Bastard halibut).